We begin with the raw amino-acid sequence, 712 residues long: Polyribonucleotide nucleotidyltransferase (712 aa).

Mg(2+) is bound by residues Asp-487 and Asp-493. One can recognise a KH domain in the interval 554–613 (PKIITMTINPDKIRDVIGPSGKQINKIIEETGVKIDIEQDGTVFISSINQEMNDKAKKII). The 69-residue stretch at 623-691 (GEIYEGKVKR…KQGRVNLSRK (69 aa)) folds into the S1 motif domain.

Belongs to the polyribonucleotide nucleotidyltransferase family. The cofactor is Mg(2+).

Its subcellular location is the cytoplasm. The catalysed reaction is RNA(n+1) + phosphate = RNA(n) + a ribonucleoside 5'-diphosphate. Involved in mRNA degradation. Catalyzes the phosphorolysis of single-stranded polyribonucleotides processively in the 3'- to 5'-direction. This is Polyribonucleotide nucleotidyltransferase from Bacillus cereus (strain ATCC 10987 / NRS 248).